A 513-amino-acid chain; its full sequence is MKQLHVQRYLEKVRSRKQHFLYPLLFKEYIYAFAHDYGLNGSIFYEPAEIIGNDNKSSSVLVKRLIIRMYQQNYLINSINHSNQNRFIGHNNYFYSHFFSLMISESFAVIMEIPFSLRLVSSPEEKEIPQFQNLRSIHSIFPFLEDKLSHLNYVSDILIPHPIHFEILVQILQCRIQDVPSLHLLRFFLHEYHNWNSLITSKKSIYVFSKENKRLFRLLYNFYVFECEFVFVFLRKQSSYLRLTSFGTFLERIHFYGKIEHLLVVYRNYFNKTLWFFTDPFMHYVRYQGKAILASKGTHLFMKKWKCYLVNFWQYYFHFWSQPHRIHINQLSNYSFHFLGYLSSVLRNLLVVRNQMLENSYLIDTVTKKFDTIVPVIPLIGSLSKAKFCTLLGHPISKPIWTDLSDCDIIDRFGRICRNLSHYYSGSSKKRSLYRIKYILRFSCARTLARKHKSTVRTFLQRLGSVLLEEFFTEEEQVLSLIFPKTTPFSLHGSHRERIWYLDIIRINDLVNH.

Belongs to the intron maturase 2 family. MatK subfamily.

It localises to the plastid. It is found in the chloroplast. Usually encoded in the trnK tRNA gene intron. Probably assists in splicing its own and other chloroplast group II introns. The protein is Maturase K of Typha angustifolia (Narrow leaf cattail).